The sequence spans 739 residues: Mitochondrial proton/calcium exchanger protein (739 aa).

The N-terminal 115 residues, 1-115 (MASILLRSCR…RGWHSSRPVR (115 aa)), are a transit peptide targeting the mitochondrion. Positions 115-136 (RDDSVVEKSLKSLKDKNKKLEE) form a coiled coil. Topologically, residues 116-208 (DDSVVEKSLK…FLRICADLFR (93 aa)) are mitochondrial intermembrane. Threonine 192 carries the post-translational modification Phosphothreonine; by PINK1. A helical membrane pass occupies residues 209–229 (LVPFLVFVVVPFMEFLLPVAV). At 230–739 (KLFPNMLPST…AEKEVAEVKS (510 aa)) the chain is on the mitochondrial matrix side. The region spanning 252–537 (KELRVKLELA…TAPVLEGLKE (286 aa)) is the Letm1 RBD domain. Coiled-coil stretches lie at residues 462–490 (NKAKLEATLQEEAAIQQEHREKELQKRSE) and 537–627 (EEEI…SQLE). Lysine 597 carries the post-translational modification N6-acetyllysine. Residues 663 to 698 (IPESKLTSLAAALDENKDGKVNIDDLVKVIELVDKE) form the EF-hand domain. Ca(2+)-binding residues include aspartate 676, asparagine 678, aspartate 680, lysine 682, and aspartate 687. Positions 708-739 (AEIVATLEKEEKVEEKEKAKEKAEKEVAEVKS) form a coiled coil. The disordered stretch occupies residues 718–739 (EKVEEKEKAKEKAEKEVAEVKS).

Belongs to the LETM1 family. In terms of assembly, homohexamer. Can form 2 complexes: a major (300 kDa) and a minor complex (500-600 kDa). Interacts with BCS1L. Interacts with GHITM. PINK1-mediated phosphorylation at Thr-192, positively regulates its mitochondrial calcium transport activity.

It localises to the mitochondrion inner membrane. The catalysed reaction is Ca(2+)(in) + 2 H(+)(out) = Ca(2+)(out) + 2 H(+)(in). It catalyses the reaction K(+)(in) + H(+)(out) = K(+)(out) + H(+)(in). With respect to regulation, inhibited by ruthenium red or its derivative Ru360. Functionally, plays an important role in maintenance of mitochondrial morphology and in mediating either calcium or potassium/proton antiport. Mediates proton-dependent calcium efflux from mitochondrion. Also functions as an electroneutral mitochondrial proton/potassium exchanger. Crucial for the maintenance of mitochondrial tubular networks and for the assembly of the supercomplexes of the respiratory chain. Required for the maintenance of the tubular shape and cristae organization. This Homo sapiens (Human) protein is Mitochondrial proton/calcium exchanger protein.